A 458-amino-acid polypeptide reads, in one-letter code: Light-independent protochlorophyllide reductase subunit N (458 aa).

[4Fe-4S] cluster-binding residues include cysteine 20, cysteine 45, and cysteine 105.

This sequence belongs to the BchN/ChlN family. In terms of assembly, protochlorophyllide reductase is composed of three subunits; ChlL, ChlN and ChlB. Forms a heterotetramer of two ChlB and two ChlN subunits. [4Fe-4S] cluster is required as a cofactor.

Its subcellular location is the plastid. It localises to the chloroplast. The catalysed reaction is chlorophyllide a + oxidized 2[4Fe-4S]-[ferredoxin] + 2 ADP + 2 phosphate = protochlorophyllide a + reduced 2[4Fe-4S]-[ferredoxin] + 2 ATP + 2 H2O. It participates in porphyrin-containing compound metabolism; chlorophyll biosynthesis (light-independent). Functionally, component of the dark-operative protochlorophyllide reductase (DPOR) that uses Mg-ATP and reduced ferredoxin to reduce ring D of protochlorophyllide (Pchlide) to form chlorophyllide a (Chlide). This reaction is light-independent. The NB-protein (ChlN-ChlB) is the catalytic component of the complex. The chain is Light-independent protochlorophyllide reductase subunit N from Angiopteris evecta (Mule's foot fern).